We begin with the raw amino-acid sequence, 213 residues long: ATP phosphoribosyltransferase (213 aa).

It belongs to the ATP phosphoribosyltransferase family. Short subfamily. In terms of assembly, heteromultimer composed of HisG and HisZ subunits.

The protein localises to the cytoplasm. The catalysed reaction is 1-(5-phospho-beta-D-ribosyl)-ATP + diphosphate = 5-phospho-alpha-D-ribose 1-diphosphate + ATP. It functions in the pathway amino-acid biosynthesis; L-histidine biosynthesis; L-histidine from 5-phospho-alpha-D-ribose 1-diphosphate: step 1/9. Catalyzes the condensation of ATP and 5-phosphoribose 1-diphosphate to form N'-(5'-phosphoribosyl)-ATP (PR-ATP). Has a crucial role in the pathway because the rate of histidine biosynthesis seems to be controlled primarily by regulation of HisG enzymatic activity. The polypeptide is ATP phosphoribosyltransferase (Variovorax paradoxus (strain S110)).